Consider the following 277-residue polypeptide: Insertion element IS407 uncharacterized 31.7 kDa protein (277 aa).

The Integrase catalytic domain occupies 103-264; the sequence is LPGAPNEVWS…APSEFAAKHR (162 aa).

The polypeptide is Insertion element IS407 uncharacterized 31.7 kDa protein (Burkholderia multivorans (strain ATCC 17616 / 249)).